Reading from the N-terminus, the 516-residue chain is GMP synthase [glutamine-hydrolyzing] (516 aa).

The Glutamine amidotransferase type-1 domain maps to 6 to 199 (KVLILDFGSQ…LFEIAGLTSG (194 aa)). Cys83 functions as the Nucleophile in the catalytic mechanism. Active-site residues include His173 and Glu175. The 192-residue stretch at 200–391 (WTMSSFLETE…LGMPDFIIWR (192 aa)) folds into the GMPS ATP-PPase domain. ATP is bound at residue 227–233 (SGGVDST).

As to quaternary structure, homodimer.

The catalysed reaction is XMP + L-glutamine + ATP + H2O = GMP + L-glutamate + AMP + diphosphate + 2 H(+). Its pathway is purine metabolism; GMP biosynthesis; GMP from XMP (L-Gln route): step 1/1. Functionally, catalyzes the synthesis of GMP from XMP. In Solidesulfovibrio magneticus (strain ATCC 700980 / DSM 13731 / RS-1) (Desulfovibrio magneticus), this protein is GMP synthase [glutamine-hydrolyzing].